The chain runs to 448 residues: Divalent metal cation transporter MntH (448 aa).

11 helical membrane-spanning segments follow: residues 41–61 (LFAF…PGNW), 69–89 (SEFG…AVLL), 117–137 (GFVL…AEVI), 147–167 (FGIP…LVLF), 176–196 (IEVI…AEMV), 215–235 (IVTN…TVMP), 270–290 (FSLT…AAAF), 307–327 (LLNP…ALLA), 363–383 (VLAI…GINE), 384–404 (LLIF…IPLV), and 424–444 (IVSW…LFYT).

The protein belongs to the NRAMP family.

The protein resides in the cell membrane. Functionally, h(+)-stimulated, divalent metal cation uptake system. This Listeria innocua serovar 6a (strain ATCC BAA-680 / CLIP 11262) protein is Divalent metal cation transporter MntH.